A 247-amino-acid chain; its full sequence is tRNA pseudouridine synthase A 1 (247 aa).

Asp-53 functions as the Nucleophile in the catalytic mechanism. Tyr-111 is a substrate binding site.

The protein belongs to the tRNA pseudouridine synthase TruA family. As to quaternary structure, homodimer.

It catalyses the reaction uridine(38/39/40) in tRNA = pseudouridine(38/39/40) in tRNA. In terms of biological role, formation of pseudouridine at positions 38, 39 and 40 in the anticodon stem and loop of transfer RNAs. This Bacillus cereus (strain ATCC 10987 / NRS 248) protein is tRNA pseudouridine synthase A 1.